The primary structure comprises 156 residues: Envelope glycoprotein L (156 aa).

Positions 1–16 (MSPLVAVLVFFSAALG) are cleaved as a signal peptide. Residues 50 to 156 (ELEWDDEDHP…LRYNGGPPAE (107 aa)) form the gL alphaherpesvirus-type domain. C71 and C95 are disulfide-bonded.

Belongs to the herpesviridae glycoprotein L (gL) family. Alphaherpesvirinae gL subfamily. In terms of assembly, interacts with glycoprotein H (gH); this interaction is necessary for the correct processing and cell surface expression of gH. The heterodimer gH/gL seems to interact with gB trimers during fusion. O-glycosylated, and sialylated.

It localises to the virion membrane. Its subcellular location is the host cell membrane. The protein resides in the host Golgi apparatus. The protein localises to the host trans-Golgi network. Functionally, the heterodimer glycoprotein H-glycoprotein L is required for the fusion of viral and plasma membranes leading to virus entry into the host cell. Acts as a functional inhibitor of gH and maintains gH in an inhibited form. Upon binding to host integrins, gL dissociates from gH leading to activation of the viral fusion glycoproteins gB and gH. The protein is Envelope glycoprotein L of Suid herpesvirus 1 (strain Indiana-Funkhauser / Becker) (SuHV-1).